Consider the following 447-residue polypeptide: Tubulin beta chain (447 aa).

Residues Gln11, Glu69, Ser138, Gly142, Thr143, Gly144, Asn204, and Asn226 each contribute to the GTP site. Mg(2+) is bound at residue Glu69. Positions 424–447 (QYQEARSTDSDEYDNEEYYNQQEE) are disordered. Over residues 433–447 (SDEYDNEEYYNQQEE) the composition is skewed to acidic residues.

It belongs to the tubulin family. In terms of assembly, dimer of alpha and beta chains. A typical microtubule is a hollow water-filled tube with an outer diameter of 25 nm and an inner diameter of 15 nM. Alpha-beta heterodimers associate head-to-tail to form protofilaments running lengthwise along the microtubule wall with the beta-tubulin subunit facing the microtubule plus end conferring a structural polarity. Microtubules usually have 13 protofilaments but different protofilament numbers can be found in some organisms and specialized cells. Requires Mg(2+) as cofactor. As to expression, lens specific.

The protein resides in the cytoplasm. Its subcellular location is the cytoskeleton. Tubulin is the major constituent of microtubules, a cylinder consisting of laterally associated linear protofilaments composed of alpha- and beta-tubulin heterodimers. Microtubules grow by the addition of GTP-tubulin dimers to the microtubule end, where a stabilizing cap forms. Below the cap, tubulin dimers are in GDP-bound state, owing to GTPase activity of alpha-tubulin. The polypeptide is Tubulin beta chain (Enteroctopus dofleini (North Pacific giant octopus)).